A 414-amino-acid polypeptide reads, in one-letter code: Carboxynorspermidine synthase (414 aa).

It belongs to the saccharopine dehydrogenase family. Carboxynorspermidine synthase subfamily. In terms of assembly, homodimer.

The enzyme catalyses carboxynorspermidine + NADP(+) + H2O = L-aspartate 4-semialdehyde + propane-1,3-diamine + NADPH + H(+). It carries out the reaction carboxyspermidine + NADP(+) + H2O = L-aspartate 4-semialdehyde + putrescine + NADPH + H(+). With respect to regulation, activated by dithiothreitol and inhibited by SH-reactive compounds. Its function is as follows. Involved in norspermidine biosynthesis. Catalyzes the synthesis of carboxynorspermidine from L-aspartate 4-semialdehyde and 1,3-diaminopropane. Is also slightly active with putrescine as a substrate. This Vibrio alginolyticus (strain ATCC 17749 / DSM 2171 / NBRC 15630 / NCIMB 1903 / NCTC 12160 / XII-53) protein is Carboxynorspermidine synthase.